The chain runs to 811 residues: G-type lectin S-receptor-like serine/threonine-protein kinase LECRK2 (811 aa).

A signal peptide spans 1–23 (MAPILFLPILQILLIYCTKSAQA). Positions 24–153 (QLNISIGSSL…DGATKWESFG (130 aa)) constitute a Bulb-type lectin domain. The Extracellular segment spans residues 24 to 464 (QLNISIGSSL…DKKYWILGSS (441 aa)). N26, N39, N59, N219, N226, N237, and N242 each carry an N-linked (GlcNAc...) asparagine glycan. One can recognise an EGF-like; atypical domain in the interval 292-344 (PENICQTIQTKVGSGACGFNSYCTFDGTKNTTNCLCPQRYKFFDNERTYKGCR). Cystine bridges form between C296/C314, C308/C325, C327/C343, C389/C411, and C393/C399. The N-linked (GlcNAc...) asparagine glycan is linked to N321. Positions 352–436 (CDLDETAAMV…LQATVLLKVP (85 aa)) constitute a PAN domain. The chain crosses the membrane as a helical span at residues 465-485 (LFFGSSVLVNFLLIFVLLFGT). At 486-811 (YCSITSRKKT…DPSSYISSLA (326 aa)) the chain is on the cytoplasmic side. In terms of domain architecture, Protein kinase spans 521–795 (GGFHEVLGTG…KVMQMLDGAV (275 aa)). Residues 527 to 535 (LGTGASGIV) and K551 each bind ATP. D645 acts as the Proton acceptor in catalysis.

The protein belongs to the protein kinase superfamily. Ser/Thr protein kinase family.

The protein resides in the membrane. It catalyses the reaction L-seryl-[protein] + ATP = O-phospho-L-seryl-[protein] + ADP + H(+). The enzyme catalyses L-threonyl-[protein] + ATP = O-phospho-L-threonyl-[protein] + ADP + H(+). In terms of biological role, involved in resistance against the herbivorous insect brown planthopper (N.lugens, BPH). Member of the BPH3 (BPH resistance locus 3) cluster which contains LECRK1, LECRK2 and LECRK3. The protein is G-type lectin S-receptor-like serine/threonine-protein kinase LECRK2 of Oryza sativa subsp. indica (Rice).